The following is a 542-amino-acid chain: Prolyl 4-hydroxylase subunit alpha-3 (542 aa).

The N-terminal stretch at 1–24 (MGPGARLALLALLALGGDPAAATG) is a signal peptide. A coiled-coil region spans residues 105–129 (LEATENIRALKDGYEKVEQDLPAFE). The stretch at 225 to 258 (EDALDYLAFACFQVGNVSCALSLSREFLVYSPDN) is one TPR repeat. Asn-240 carries an N-linked (GlcNAc...) asparagine glycan. One can recognise a Fe2OG dioxygenase domain in the interval 420–527 (YAEYLQVVNY…KWVANKWIHE (108 aa)). Residues His-438 and Asp-440 each contribute to the Fe cation site. Asn-480 is a glycosylation site (N-linked (GlcNAc...) asparagine). Residue His-508 participates in Fe cation binding. Lys-518 is a binding site for 2-oxoglutarate.

This sequence belongs to the P4HA family. As to quaternary structure, heterotetramer of two alpha-3 chains and two beta chains (the beta chain is the multi-functional PDI). It depends on Fe(2+) as a cofactor. L-ascorbate is required as a cofactor. N-glycosylation plays no role in the catalytic activity.

The protein resides in the endoplasmic reticulum lumen. The catalysed reaction is L-prolyl-[collagen] + 2-oxoglutarate + O2 = trans-4-hydroxy-L-prolyl-[collagen] + succinate + CO2. Catalyzes the post-translational formation of 4-hydroxyproline in -Xaa-Pro-Gly- sequences in collagens and other proteins. This chain is Prolyl 4-hydroxylase subunit alpha-3 (P4ha3), found in Mus musculus (Mouse).